We begin with the raw amino-acid sequence, 570 residues long: Dwarfin sma-4 (570 aa).

The tract at residues 115–134 is disordered; that stretch reads SSQASSQPPPTPTVNPTPIP. Pro residues predominate over residues 121-134; that stretch reads QPPPTPTVNPTPIP. Residues 150–273 enclose the MH1 domain; that stretch reads QISHVLQCYQ…YERVVSNRIT (124 aa). Cysteine 203, cysteine 247, cysteine 258, and histidine 263 together coordinate Zn(2+). Residues 350–570 enclose the MH2 domain; it reads WCSIIYYELD…LKNSSQFGSS (221 aa).

Belongs to the dwarfin/SMAD family.

The protein resides in the cytoplasm. It localises to the nucleus. Functionally, involved in TGF-beta pathway. The polypeptide is Dwarfin sma-4 (sma-4) (Caenorhabditis elegans).